The primary structure comprises 82 residues: Probable 26S proteasome complex subunit dss-1 (82 aa).

The tract at residues 56–82 (NWDDETHESEFSKQLKEELRKSGHQVA) is disordered. A compositionally biased stretch (basic and acidic residues) spans 63–76 (ESEFSKQLKEELRK).

The protein belongs to the DSS1/SEM1 family. In terms of assembly, part of the 26S proteasome. In terms of tissue distribution, expressed in intestinal epithelium and head neurons.

The protein localises to the nucleus. It localises to the cytoplasm. In terms of biological role, subunit of the 26S proteasome which plays a role in ubiquitin-dependent proteolysis. Has an essential role in oogenesis and larval growth. Required for intestinal function and default lifespan. The chain is Probable 26S proteasome complex subunit dss-1 (dss-1) from Caenorhabditis elegans.